A 425-amino-acid chain; its full sequence is MLNIKWIRENQELFDEKLSQRFIEPMSSKIAMLDQEKRKITSLIQEFQHARKVKSKILGNMVSKSGEEFEELQRDVNHINEKLAELEQNLDNNNELNELLNMLPNIPDEEVPYGIDGSMNKLVRAYGKTNKNALNKQHFELGTKLNLMDFEQTAKISGSRFVTLKGDLAKLERALINFMIDIHTKEFDFFEISPPFLVRDRAMYNAGQLPKFSEESFITTNGYRLIPTAEVSLVNIVADTIIQREKLPMRYVAYTTCFRSEAGSSGRDTRGMIRLHQFGKVELVSITTPEESKNEHEYITNASETILKKLDLPYRVMLLCTGDMGFAAKKTYDIEVWLPGQNQYREIASCSNCGDFQARRMKARYKEFGSNETTLVHTLNASGLPIGRTIVAILENYQNNDGSITIPDVLINYMGGLQKITTYSE.

An L-serine-binding site is contributed by 228 to 230 (TAE). 259 to 261 (RSE) lines the ATP pocket. Glu-282 serves as a coordination point for L-serine. 346-349 (EIAS) serves as a coordination point for ATP. Ser-382 is a binding site for L-serine.

The protein belongs to the class-II aminoacyl-tRNA synthetase family. Type-1 seryl-tRNA synthetase subfamily. As to quaternary structure, homodimer. The tRNA molecule binds across the dimer.

It is found in the cytoplasm. The catalysed reaction is tRNA(Ser) + L-serine + ATP = L-seryl-tRNA(Ser) + AMP + diphosphate + H(+). The enzyme catalyses tRNA(Sec) + L-serine + ATP = L-seryl-tRNA(Sec) + AMP + diphosphate + H(+). The protein operates within aminoacyl-tRNA biosynthesis; selenocysteinyl-tRNA(Sec) biosynthesis; L-seryl-tRNA(Sec) from L-serine and tRNA(Sec): step 1/1. Functionally, catalyzes the attachment of serine to tRNA(Ser). Is also able to aminoacylate tRNA(Sec) with serine, to form the misacylated tRNA L-seryl-tRNA(Sec), which will be further converted into selenocysteinyl-tRNA(Sec). This is Serine--tRNA ligase from Rickettsia prowazekii (strain Madrid E).